The following is a 166-amino-acid chain: Nucleotide-binding protein Acid_3194 (166 aa).

It belongs to the YajQ family.

In terms of biological role, nucleotide-binding protein. The sequence is that of Nucleotide-binding protein Acid_3194 from Solibacter usitatus (strain Ellin6076).